Consider the following 329-residue polypeptide: Cytosolic arginine sensor for mTORC1 subunit 2 (329 aa).

2 consecutive ACT domains span residues 72–139 and 262–322; these read ADAT…MHTL and ELWK…NALQ.

The protein belongs to the GATS family. In terms of assembly, may form homodimers and heterodimers.

It localises to the cytoplasm. The protein resides in the cytosol. Functions as a negative regulator of the TORC1 signaling pathway. This is Cytosolic arginine sensor for mTORC1 subunit 2 from Xenopus tropicalis (Western clawed frog).